Reading from the N-terminus, the 854-residue chain is Disrupted in schizophrenia 1 protein (854 aa).

A compositionally biased stretch (gly residues) spans 1 to 18; it reads MPGGGPQGAPAAAGGGGV. Disordered stretches follow at residues 1 to 24, 179 to 205, 221 to 257, and 278 to 323; these read MPGG…RAGS, SAEL…SHSA, GERG…GPHE, and AQAA…SGDA. Residues 1–292 form an interaction with MAP1A region; sequence MPGGGPQGAP…NSSRPERDMH (292 aa). The short motif at 197–203 is the Interaction with FBXW7 element; the sequence is PTPPGSH. Residues 285-295 are compositionally biased toward basic and acidic residues; the sequence is SRPERDMHSLP. An interaction with TRAF3IP1 region spans residues 293–696; the sequence is SLPDMDPGSS…LGKVWEADLE (404 aa). A compositionally biased stretch (low complexity) spans 296 to 309; that stretch reads DMDPGSSSSLDPSL. 3 coiled-coil regions span residues 366 to 394, 452 to 505, and 602 to 666; these read ENDD…HFQL, ITRR…CDLT, and WTAK…SVKE. A Glycyl lysine isopeptide (Lys-Gly) (interchain with G-Cter in ubiquitin) cross-link involves residue Lys372. Positions 440-597 are required for localization to punctate cytoplasmic foci; the sequence is LEPTAQDSLH…LLEAKMHAIS (158 aa). The segment at 446 to 854 is necessary and sufficient for interaction with PCNT and localization at the centrosome; it reads DSLHVSITRR…MTAGVHEAQA (409 aa). The segment at 598–854 is interaction with ATF4 and ATF5; the sequence is GNHFWTAKDL…MTAGVHEAQA (257 aa). The disordered stretch occupies residues 716–739; it reads VEDERQMDDLEGAAPPIPPRLHSE. The segment at 727–854 is interaction with PAFAH1B1; it reads GAAPPIPPRL…MTAGVHEAQA (128 aa). A coiled-coil region spans residues 802 to 830; the sequence is SHDEDLIQSLRRELQMVKETLQAMILQLQ. The interaction with NDEL1 stretch occupies residues 802-835; that stretch reads SHDEDLIQSLRRELQMVKETLQAMILQLQPAKEA.

In terms of assembly, interacts with NDEL1. Interacts with CCDC88A (via C-terminus); the interaction is direct. Interacts with GSK3B. Interacts with tubulin alpha, ACTN2, ANKHD1, ATF4, ATF5, CEP63, EIF3S3, MAP1A, NDEL1, PAFAH1B1, RANBP9, SPTBN4, SYNE1 and TRAF3IP1. Interaction with microtubules may be mediated in part by TRAF3IP1. Interacts (via C-terminal) with PCNT. Interacts with CHCHD6. Interacts with CCDC141. Interacts with FBXW7, the substrate-recognition component of a SCF (SKP1-CUL1-F-box protein) E3 ubiquitin-protein ligase complex; the interaction targets DISC1 for proteasomal degradation. Interacts with ZNF365. Interacts with ATF4; inhibiting ATF4 transcription factor activity by disrupting ATF4 dimerization and DNA-binding. Interacts with PDE4B (isoform PDE4B5). In terms of processing, ubiquitinated. Ubiquitination with 'Lys-48'-linked polyubiquitin chains leads to its proteasomal degradation. As to expression, ubiquitous. Highly expressed in the dentate gyrus of the hippocampus. Also expressed in the temporal and parahippocampal cortices and cells of the white matter.

The protein resides in the cytoplasm. The protein localises to the cytoskeleton. Its subcellular location is the mitochondrion. It localises to the microtubule organizing center. It is found in the centrosome. The protein resides in the postsynaptic density. Functionally, involved in the regulation of multiple aspects of embryonic and adult neurogenesis. Required for neural progenitor proliferation in the ventrical/subventrical zone during embryonic brain development and in the adult dentate gyrus of the hippocampus. Participates in the Wnt-mediated neural progenitor proliferation as a positive regulator by modulating GSK3B activity and CTNNB1 abundance. Plays a role as a modulator of the AKT-mTOR signaling pathway controlling the tempo of the process of newborn neurons integration during adult neurogenesis, including neuron positioning, dendritic development and synapse formation. Inhibits the activation of AKT-mTOR signaling upon interaction with CCDC88A. Regulates the migration of early-born granule cell precursors toward the dentate gyrus during the hippocampal development. Inhibits ATF4 transcription factor activity in neurons by disrupting ATF4 dimerization and DNA-binding. Plays a role, together with PCNT, in the microtubule network formation. This is Disrupted in schizophrenia 1 protein from Homo sapiens (Human).